The primary structure comprises 159 residues: MMMDILMYLFETYIHSDAELQVEQDELEEELLRAGFQQKDIYKALVWLEELAALQQSDTSSAISACIASSSTRIYTAKEMQRLDLECRGFLLFLEQINVLTTETREMVIDRVMGLETSEFELEDLKWIILMVLFNVPGNENAYTLMEELLYTKEQGILH.

This sequence belongs to the Smg family.

The protein is Protein Smg homolog of Vibrio parahaemolyticus serotype O3:K6 (strain RIMD 2210633).